A 149-amino-acid polypeptide reads, in one-letter code: Histone H3-like 1 (149 aa).

Positions 1-19 are enriched in basic and acidic residues; that stretch reads MARPRKEAPQRNLDRDENA. The segment at 1–58 is disordered; the sequence is MARPRKEAPQRNLDRDENARQQPTEEPQDEAPRNQGRQQQQQRPPAAPRRPRRFRPGT. Over residues 33-44 the composition is skewed to low complexity; it reads RNQGRQQQQQRP.

This sequence belongs to the histone H3 family. The nucleosome is a histone octamer containing two molecules each of H2A, H2B, H3 and H4 assembled in one H3-H4 heterotetramer and two H2A-H2B heterodimers. The octamer wraps approximately 147 bp of DNA. Pollen specific.

The protein resides in the nucleus. It localises to the chromosome. Core component of nucleosome. Nucleosomes wrap and compact DNA into chromatin, limiting DNA accessibility to the cellular machineries which require DNA as a template. Histones thereby play a central role in transcription regulation, DNA repair, DNA replication and chromosomal stability. DNA accessibility is regulated via a complex set of post-translational modifications of histones, also called histone code, and nucleosome remodeling. The protein is Histone H3-like 1 (gH3) of Lilium longiflorum (Trumpet lily).